A 61-amino-acid chain; its full sequence is Small ribosomal subunit protein uS14 (61 aa).

Zn(2+) contacts are provided by cysteine 24, cysteine 27, cysteine 40, and cysteine 43.

This sequence belongs to the universal ribosomal protein uS14 family. Zinc-binding uS14 subfamily. In terms of assembly, part of the 30S ribosomal subunit. Contacts proteins S3 and S10. Requires Zn(2+) as cofactor.

Binds 16S rRNA, required for the assembly of 30S particles and may also be responsible for determining the conformation of the 16S rRNA at the A site. This Treponema pallidum (strain Nichols) protein is Small ribosomal subunit protein uS14.